The following is a 111-amino-acid chain: Small ribosomal subunit protein bS16 (111 aa).

This sequence belongs to the bacterial ribosomal protein bS16 family.

This Rickettsia bellii (strain OSU 85-389) protein is Small ribosomal subunit protein bS16.